We begin with the raw amino-acid sequence, 261 residues long: uncharacterized protein (261 aa).

The segment covering 1–12 has biased composition (polar residues); the sequence is MSRTSSQNQEII. The segment at 1 to 139 is disordered; the sequence is MSRTSSQNQE…KELDTINKKT (139 aa). The span at 23–55 shows a compositional bias: low complexity; it reads SSKPSKSSKPSKSSKPSKSSKTSKSSRSSGSKS. The span at 65–74 shows a compositional bias: basic and acidic residues; the sequence is SRKDKYKEEY. Positions 79–108 are enriched in acidic residues; sequence YPDEQEYEQEYEQEYEQEYQDNGEQTEEFV. A compositionally biased stretch (basic and acidic residues) spans 122-139; it reads DERQTQSNKELDTINKKT. 2 coiled-coil regions span residues 151–181 and 218–243; these read MDHD…IIKL and EDII…KKIE.

This is an uncharacterized protein from Acanthamoeba polyphaga (Amoeba).